A 1216-amino-acid polypeptide reads, in one-letter code: ATP-dependent helicase/nuclease subunit A (1216 aa).

Positions 26–488 (QKKTAEQIEA…ILLKENFRSS (463 aa)) constitute a UvrD-like helicase ATP-binding domain. Residue 47–54 (ASAGSGKT) participates in ATP binding. One can recognise a UvrD-like helicase C-terminal domain in the interval 515–802 (KHQLVFANTK…ELMTIHKSKG (288 aa)).

This sequence belongs to the helicase family. AddA subfamily. Heterodimer of AddA and AddB/RexB. Mg(2+) serves as cofactor.

It carries out the reaction Couples ATP hydrolysis with the unwinding of duplex DNA by translocating in the 3'-5' direction.. The enzyme catalyses ATP + H2O = ADP + phosphate + H(+). The heterodimer acts as both an ATP-dependent DNA helicase and an ATP-dependent, dual-direction single-stranded exonuclease. Recognizes the chi site generating a DNA molecule suitable for the initiation of homologous recombination. The AddA nuclease domain is required for chi fragment generation; this subunit has the helicase and 3' -&gt; 5' nuclease activities. This is ATP-dependent helicase/nuclease subunit A from Streptococcus pneumoniae (strain CGSP14).